We begin with the raw amino-acid sequence, 567 residues long: Urease subunit alpha (567 aa).

The Urease domain maps to 129-567 (GGVDTHIHFI…LPMAQRYFLF (439 aa)). Residues H134, H136, and K217 each contribute to the Ni(2+) site. N6-carboxylysine is present on K217. H219 contacts substrate. 2 residues coordinate Ni(2+): H246 and H272. H320 (proton donor) is an active-site residue. D360 is a Ni(2+) binding site.

The protein belongs to the metallo-dependent hydrolases superfamily. Urease alpha subunit family. Heterotrimer of UreA (gamma), UreB (beta) and UreC (alpha) subunits. Three heterotrimers associate to form the active enzyme. It depends on Ni cation as a cofactor. Carboxylation allows a single lysine to coordinate two nickel ions.

It is found in the cytoplasm. The catalysed reaction is urea + 2 H2O + H(+) = hydrogencarbonate + 2 NH4(+). Its pathway is nitrogen metabolism; urea degradation; CO(2) and NH(3) from urea (urease route): step 1/1. This is Urease subunit alpha from Proteus hauseri.